A 181-amino-acid chain; its full sequence is MPQTDTAELVVLLDDDGRTIGSAPKAQVHHASTPLHLAFSCYLFDDAGRVLLTRRAVHKRTFPGIWTNTCCGHPAPGEALQDAVTRRVREELGVGITDLRCVLPDFRYRAVAADGVVENEVCPVFCGRAVGQVHPDRDEVADHVWVPWQHMRAAAEFGWAISPWAAEQVPLLDAAGIGHRD.

Residues H29 and H36 each contribute to the Mn(2+) site. One can recognise a Nudix hydrolase domain in the interval 34 to 167 (PLHLAFSCYL…GWAISPWAAE (134 aa)). C71 is a catalytic residue. A Mn(2+)-binding site is contributed by H73. Position 91 (E91) interacts with Mg(2+). E118 and E120 together coordinate Mn(2+). Residue E120 is part of the active site.

It belongs to the IPP isomerase type 1 family. Mg(2+) is required as a cofactor. The cofactor is Mn(2+).

The protein localises to the cytoplasm. The catalysed reaction is isopentenyl diphosphate = dimethylallyl diphosphate. It functions in the pathway isoprenoid biosynthesis; dimethylallyl diphosphate biosynthesis; dimethylallyl diphosphate from isopentenyl diphosphate: step 1/1. Functionally, catalyzes the 1,3-allylic rearrangement of the homoallylic substrate isopentenyl (IPP) to its highly electrophilic allylic isomer, dimethylallyl diphosphate (DMAPP). This is Isopentenyl-diphosphate Delta-isomerase from Mycolicibacterium vanbaalenii (strain DSM 7251 / JCM 13017 / BCRC 16820 / KCTC 9966 / NRRL B-24157 / PYR-1) (Mycobacterium vanbaalenii).